The primary structure comprises 246 residues: Submandibular gland secretory Glx-rich protein CA (246 aa).

A signal peptide spans 1–18 (MLVVLLTAALLALSSAQG). The interval 14-223 (SSAQGTDEEV…SGRPKKPLLP (210 aa)) is disordered. 7 stretches are compositionally biased toward low complexity: residues 39 to 50 (PVDSGSDPPSAD), 58 to 71 (EGESAAPANEEPPA), 81 to 93 (QQEPTQAENQEPP), 104 to 116 (QQEPTQAENQEPP), 127 to 141 (QQEPTQAEDQQPPAT), 150 to 159 (QQESTQAENQ), and 178 to 196 (VESPPSSPENSQEQPQQTN). 5 tandem repeats follow at residues 67–89 (EEPPATSGSEEEQQQQEPTQAEN), 90–112 (QEPPATSGSEEEQQQQEPTQAEN), 113–135 (QEPPATSGSEEEQQQQEPTQAED), 136–158 (QQPPATSGSEEEQQQQESTQAEN), and 159–181 (QEPSDSAGEGQETQPEEGNVESP). The interval 67–181 (EEPPATSGSE…QPEEGNVESP (115 aa)) is 5 X 23 AA tandem repeats. Residues 197-216 (PEEKPPAPKTQEEPQHDSGR) show a composition bias toward basic and acidic residues.

Submandibular gland acinar cells.

It localises to the secreted. GRP proteins have a marked affinity for hydroxyapatite. They may play a role in the formation of the protective acquired pellicle at the saliva-tooth interface. The sequence is that of Submandibular gland secretory Glx-rich protein CA (Grpca) from Rattus norvegicus (Rat).